The primary structure comprises 284 residues: Plastid-lipid-associated protein 6, chloroplastic (284 aa).

Residues 1–11 show a composition bias toward low complexity; sequence MATSSTFSSLL. The interval 1–47 is disordered; it reads MATSSTFSSLLPSPPALLSDHRSPPPSIRYSFSPLTTPKSSRLGFTV. The transit peptide at 1–72 directs the protein to the chloroplast; sequence MATSSTFSSL…SIGGESDPPP (72 aa). S96, S105, S148, S151, and S155 each carry phosphoserine.

The protein belongs to the PAP/fibrillin family. Part of the Photosystem II light-harvesting complex (LHCII). Post-translationally, phosphorylated as part of a basal defense response.

Its subcellular location is the plastid. The protein localises to the chloroplast. The protein resides in the plastoglobule. Functionally, required for plastoglobule development and resistance to multiple stresses. Regulates plastoglobule osmiophilic content. May be involved in the transport of lipophilic antioxidants in and out of the plastoglobule. This chain is Plastid-lipid-associated protein 6, chloroplastic, found in Arabidopsis thaliana (Mouse-ear cress).